We begin with the raw amino-acid sequence, 1658 residues long: Silent chromatin protein ESC1 (1658 aa).

The segment covering 36–54 has biased composition (basic and acidic residues); the sequence is DSKMKDQHGYSRVHNDKYR. 2 disordered regions span residues 36 to 76 and 156 to 499; these read DSKM…SSHI and TSFQ…LENE. Composition is skewed to acidic residues over residues 205 to 214 and 245 to 254; these read LENDEYELSE and SNDEYAEEEG. The span at 262-286 shows a compositional bias: polar residues; it reads GQEQANVENATQISSSDSSEGQNYS. Over residues 289–305 the composition is skewed to acidic residues; that stretch reads VEMELEDDIDVESDAEK. The segment covering 335–352 has biased composition (basic and acidic residues); sequence VIEKYESDEHKVHQRYSE. Residues 365–375 show a composition bias toward acidic residues; the sequence is VDDESEDEESQ. Over residues 386-397 the composition is skewed to basic and acidic residues; it reads VYHHNEHELDDK. Residues 398–407 show a composition bias toward acidic residues; that stretch reads ELIEDIESSD. Residues 408 to 417 are compositionally biased toward low complexity; that stretch reads SESQSAQESE. Basic and acidic residues-rich tracts occupy residues 425–435, 442–461, and 471–482; these read EYKMKNEKSTS, SESRDQGFAKDAYTKNKVEQ, and DDIIRSSLDKNF. Residue Thr-500 is modified to Phosphothreonine. Ser-532 carries the post-translational modification Phosphoserine. Disordered stretches follow at residues 550-584 and 589-608; these read SRNSNCPQKEEQVSESYLGHSNGSNLSGRSLDESE and LKDFTGENNNNLKTDRGDLS. Residues 568–577 show a composition bias toward polar residues; that stretch reads GHSNGSNLSG. A phosphoserine mark is found at Ser-579, Ser-583, Ser-608, and Ser-662. Disordered stretches follow at residues 770–819, 863–964, and 1082–1115; these read SKET…EDNT, EMSS…VKGT, and ENNTNMHDQVSQACSDSDRDQDSTAEKNVEGSAK. Residues 800–812 show a composition bias toward polar residues; it reads QSKNFPGVANSTD. Residues Ser-865 and Ser-866 each carry the phosphoserine modification. A compositionally biased stretch (basic and acidic residues) spans 869-878; the sequence is ECVKQNDDGS. Residues 879 to 905 are compositionally biased toward polar residues; the sequence is KTQISFSTDSPDNFQESNDNTEFSSTK. Phosphoserine occurs at positions 888 and 911. The segment covering 918 to 931 has biased composition (basic and acidic residues); that stretch reads SLKKELTKAEVVDK. A compositionally biased stretch (acidic residues) spans 932–956; that stretch reads LDEEESEDSYEQDYADPEPGNDEGS. Phosphoserine is present on residues Ser-937, Ser-1092, Ser-1096, Ser-1098, Ser-1166, Ser-1176, and Ser-1178. The segment covering 1082 to 1096 has biased composition (polar residues); that stretch reads ENNTNMHDQVSQACS. The segment covering 1097–1115 has biased composition (basic and acidic residues); the sequence is DSDRDQDSTAEKNVEGSAK. Residues 1197–1207 show a composition bias toward polar residues; sequence STDASVNMKSV. The disordered stretch occupies residues 1197–1216; it reads STDASVNMKSVSSKERDSDE. Phosphoserine is present on residues Ser-1214 and Ser-1254. Over residues 1261-1272 the composition is skewed to basic and acidic residues; that stretch reads VKDKENLHKSEE. A disordered region spans residues 1261–1315; it reads VKDKENLHKSEEPLVEGLQSEQHFEKKDHSENEEEFDTIYGDITSANIHSNAPDD. 3 positions are modified to phosphoserine: Ser-1290, Ser-1326, and Ser-1332. Disordered stretches follow at residues 1334-1482 and 1503-1658; these read RLIE…TSPE and PATT…SVDK. A compositionally biased stretch (basic and acidic residues) spans 1335–1366; that stretch reads LIEDSRRGKNQEESDEVNTSRERDLTFEKSVN. Phosphoserine occurs at positions 1403, 1409, 1450, and 1454. Residues 1407-1423 show a composition bias toward acidic residues; the sequence is LNSEPEEAELYELEIEG. Positions 1463 to 1479 are enriched in polar residues; that stretch reads YPYSNSENITAEKSAPT. Over residues 1507–1537 the composition is skewed to basic and acidic residues; it reads LEKHDKTNVTSVLDDRSEHLSSHDVDNEPHD. The residue at position 1539 (Ser-1539) is a Phosphoserine. Basic and acidic residues-rich tracts occupy residues 1550–1564 and 1575–1591; these read PEHQAVDIPVKVEVK and VLEEQKPSMELINDKSS. 2 positions are modified to phosphoserine: Ser-1590 and Ser-1591. The span at 1607-1626 shows a compositional bias: basic residues; sequence TKAKKKSRKRNYNSRRRKRK. Polar residues predominate over residues 1648 to 1658; sequence RGQNTHPSVDK.

In terms of assembly, interacts with SIR4.

The protein localises to the nucleus. Functionally, involved in the clustering of telomeres at the nuclear periphery, forming discrete subcompartments that accumulate a complex of histone-binding silencing factors like SIR4. Required for SIR4-mediated anchoring and partitioning of plasmids. In Saccharomyces cerevisiae (strain ATCC 204508 / S288c) (Baker's yeast), this protein is Silent chromatin protein ESC1 (ESC1).